The chain runs to 678 residues: MSLSNNQTQFVTVFVPIQLSIDVFRKMNNINSFVNDNLTNFPIVTVDQLIKVVNNNNNNNNNNNNNNNNNNNNTSISNNGDINNCLATFEQVQNNCFETCDFKATEREHYFASGKQIQESVLPEEEEEKISVNNFAMVTVEPNNCFVKAQQINSVAPLSLDNRNCVRRAHREVNTFVQVFDVCVFNLKVVNVATNESQVNLFNGGNVENICFDRSIQMPRSSADDFDWSSQQQSSWYSLALSIIPIYHEIILVLCNWLVVAFYKYWQHQQQKQLPPHPLNIIVPNVSKRIAVNLNNQLISLTFTNFLKNIFFLNNNNNNNNNNNNNNNNNNNNNNNNNNNNKTNNNQLNLSKEICNENLNFEEFNFEDESVCKYNRLTNSCENISKIQQVNEESELLDWFSDFEEMDSVLLQNGTEFDNDHPMVKSQAPSITFKSLDQFIKYLEENNCVDDIEVSPCSKSHTFNRPVSTPRLIIKPTWCVYGDSLNTEFFHSCLKDKTCGDIIVDHFEPLVSSPTDFLLSNGGQRILDTPNAGGSSVWSEVLSFEVLNQVFGAQLKKTETEIEYAPGSKITDFSVDINNSHIGVSVVRIINFFDLNGRTYKAVFTPEYARNLLYKKLFGVIASTEAVVDKWEKQILYVWTTSSCVADIIVQEYWKVPAKLRSNTLVYVNHATNSEFLF.

Positions 55 to 73 are enriched in low complexity; the sequence is NNNNNNNNNNNNNNNNNNN. A disordered region spans residues 55 to 75; that stretch reads NNNNNNNNNNNNNNNNNNNTS. The helical transmembrane segment at 243-263 threads the bilayer; it reads IIPIYHEIILVLCNWLVVAFY. Positions 318-346 are enriched in low complexity; that stretch reads NNNNNNNNNNNNNNNNNNNNNNNNKTNNN. The segment at 318 to 347 is disordered; it reads NNNNNNNNNNNNNNNNNNNNNNNNKTNNNQ.

The protein localises to the membrane. This chain is AAC-rich mRNA clone AAC4 protein (AAC4), found in Dictyostelium discoideum (Social amoeba).